The following is a 90-amino-acid chain: QKFCTLDIAPVCCQIVIGGGMYTAGNACMCEGFVSGVGRCENPKECPCTREAQIPSCCSSRWGLVSVTGKCACDCLGGTVAFPEPCPSPY.

Q1 carries the post-translational modification Pyrrolidone carboxylic acid. C46 and C71 are disulfide-bonded.

Post-translationally, the N-terminus is blocked. Contains seven disulfide bonds. In terms of processing, proteolytically cleaved. Major mature form may consist of cleaved, disulfide-bonded N-terminal and C-terminal chains.

In terms of biological role, lectin with specificity for complex N-linked glycans and O-linked glycans. Has hemagglutinating activity towards rabbit erythrocytes. This chain is Lectin-1, found in Hypnea musciformis (Red alga).